Reading from the N-terminus, the 1005-residue chain is Espin-like protein (1005 aa).

9 ANK repeats span residues 1–31 (MEKQRALVAAKDGDVATLERLLEAGALGPGI), 35–64 (LGAGLVHHATRAGHLDCVKFLVQRAQLPGN), 69–99 (NGATPAHDAAATGSLAELCWLVREGGCGLQD), 103–132 (SGVSPLHLAARFGHPVLVEWLLHEGHSATL), 136–166 (EGARPLHHAAVSGDLTCLKLLTAAHGSSVNR), 170–200 (SGASPLYLACQEGHLHLAQFLVKDCGADVHL), 204–234 (DGMSALHAAAARGHYSLVVWLVTFTDIGLTA), 238–267 (EGATALHFAARGGHTPILDRLLLMGTPILR), and 270–299 (WGGTPLHDAAENGQMECCQTLVSHHVDPSL). Disordered stretches follow at residues 333 to 444 (LMTP…ERGQ) and 462 to 483 (LGAESSAEAQDNGGSSGPTEQA). Pro residues predominate over residues 334–346 (MTPPPPPFPPPPL). Over residues 468-480 (AEAQDNGGSSGPT) the composition is skewed to polar residues. Residues 517–541 (LQLRRRCQEYESELGRLAAELQALL) adopt a coiled-coil conformation. Disordered stretches follow at residues 616 to 644 (GDEKPSTRPLQDTCREASASPPRSEAQRQ), 695 to 730 (RSGLASGEPRPGDTEEASDSGISCEEVPSEAGAAAG), and 773 to 795 (LRGQEAARSPGPPSPPSEGPRLG).

In terms of assembly, interacts with MYO3A (via C-terminus). Interacts with MYO3B (via C-terminus).

The protein localises to the cell projection. It is found in the stereocilium. Its function is as follows. Binds to but does not cross-link actin. Required for the formation and maintenance of inner ear hair cell stereocilia and staircase formation. Essential for normal hearing. The protein is Espin-like protein (ESPNL) of Homo sapiens (Human).